The primary structure comprises 465 residues: tRNA modification GTPase MnmE (465 aa).

Positions 21, 85, and 124 each coordinate (6S)-5-formyl-5,6,7,8-tetrahydrofolate. The 168-residue stretch at 220 to 387 folds into the TrmE-type G domain; it reads GVPVAIIGET…LQQRLVAAAH (168 aa). Asn230 serves as a coordination point for K(+). GTP-binding positions include 230-235, 249-255, and 274-277; these read NAGKST, SDIHGTT, and DTAG. Ser234 provides a ligand contact to Mg(2+). Positions 249, 251, and 254 each coordinate K(+). Thr255 serves as a coordination point for Mg(2+). Residue Lys465 participates in (6S)-5-formyl-5,6,7,8-tetrahydrofolate binding.

Belongs to the TRAFAC class TrmE-Era-EngA-EngB-Septin-like GTPase superfamily. TrmE GTPase family. As to quaternary structure, homodimer. Heterotetramer of two MnmE and two MnmG subunits. The cofactor is K(+).

The protein localises to the cytoplasm. Its function is as follows. Exhibits a very high intrinsic GTPase hydrolysis rate. Involved in the addition of a carboxymethylaminomethyl (cmnm) group at the wobble position (U34) of certain tRNAs, forming tRNA-cmnm(5)s(2)U34. The protein is tRNA modification GTPase MnmE of Bacteroides fragilis (strain ATCC 25285 / DSM 2151 / CCUG 4856 / JCM 11019 / LMG 10263 / NCTC 9343 / Onslow / VPI 2553 / EN-2).